A 31-amino-acid polypeptide reads, in one-letter code: Cyclotide cter-D (31 aa).

The cyclopeptide (Gly-Asn) cross-link spans 1–31; sequence GIPCAESCVWIPCTVTALLGCSCKDKVCYLN. Disulfide bonds link Cys4–Cys21, Cys8–Cys23, and Cys13–Cys28.

In terms of processing, contains 3 disulfide bonds. This is a cyclic peptide. In terms of tissue distribution, expressed in root, seed and nodule but not in flower, stem, shoot, leaf and pod.

Functionally, probably participates in a plant defense mechanism. In Clitoria ternatea (Butterfly pea), this protein is Cyclotide cter-D.